The chain runs to 199 residues: MMRGSTEIDMPESSSVSKGTAPLIAAPMKEKGGYKKGIAIFDFILRLAAIATALAAAASMGTSDETLPFFTQFFQFQASYDDLPTFQFFVIAMAIVAGYLVLSLPFSIVAIVRPHAAGPRLLLIILDTVALTLNTAAGAAAAAIVYLAHNGNSSTNWLAICQQFGDFCQKNSGAVVASFITVVIFVFLLVLSAFALRRH.

Over 1–37 (MMRGSTEIDMPESSSVSKGTAPLIAAPMKEKGGYKKG) the chain is Cytoplasmic. The chain crosses the membrane as a helical span at residues 38 to 58 (IAIFDFILRLAAIATALAAAA). The Extracellular portion of the chain corresponds to 59–87 (SMGTSDETLPFFTQFFQFQASYDDLPTFQ). The helical transmembrane segment at 88 to 108 (FFVIAMAIVAGYLVLSLPFSI) threads the bilayer. Residues 109-120 (VAIVRPHAAGPR) are Cytoplasmic-facing. Residues 121–141 (LLLIILDTVALTLNTAAGAAA) form a helical membrane-spanning segment. The Extracellular portion of the chain corresponds to 142-173 (AAIVYLAHNGNSSTNWLAICQQFGDFCQKNSG). A glycan (N-linked (GlcNAc...) asparagine) is linked at asparagine 152. Residues 174-194 (AVVASFITVVIFVFLLVLSAF) form a helical membrane-spanning segment. Residues 195-199 (ALRRH) are Cytoplasmic-facing.

Belongs to the Casparian strip membrane proteins (CASP) family. As to quaternary structure, homodimer and heterodimers.

The protein localises to the cell membrane. Functionally, regulates membrane-cell wall junctions and localized cell wall deposition. Required for establishment of the Casparian strip membrane domain (CSD) and the subsequent formation of Casparian strips, a cell wall modification of the root endodermis that determines an apoplastic barrier between the intraorganismal apoplasm and the extraorganismal apoplasm and prevents lateral diffusion. This Populus trichocarpa (Western balsam poplar) protein is Casparian strip membrane protein 2.